Reading from the N-terminus, the 149-residue chain is Oligosaccharyltransferase complex subunit ostc-B (149 aa).

At 1 to 32 the chain is on the cytoplasmic side; the sequence is MESLYRIPFTVLECPNLKLKKPSWLHMPSAMT. A helical membrane pass occupies residues 33–53; the sequence is VYAMVVVSYFLITGGIIYDVI. Residues 54–83 lie on the Extracellular side of the membrane; it reads VEPPSVGSMTDEHGHQRPVAFLAYRVNGQY. Residues 84–104 traverse the membrane as a helical segment; it reads IMEGLASSFLFTMGGLGFIIL. Residues 105-117 lie on the Cytoplasmic side of the membrane; the sequence is DRSNAPNIPKLNR. A helical membrane pass occupies residues 118 to 138; it reads FLLLFIGFVCVLLSFFMARVF. Topologically, residues 139 to 149 are extracellular; it reads MRMKLPGYLMG.

The protein belongs to the OSTC family. In terms of assembly, specific component of the STT3A-containing form of the oligosaccharyltransferase (OST) complex.

It is found in the membrane. The protein operates within protein modification; protein glycosylation. Functionally, specific component of the STT3A-containing form of the oligosaccharyl transferase (OST) complex that catalyzes the initial transfer of a defined glycan (Glc(3)Man(9)GlcNAc(2) in eukaryotes) from the lipid carrier dolichol-pyrophosphate to an asparagine residue within an Asn-X-Ser/Thr consensus motif in nascent polypeptide chains, the first step in protein N-glycosylation. N-glycosylation occurs cotranslationally and the complex associates with the Sec61 complex at the channel-forming translocon complex that mediates protein translocation across the endoplasmic reticulum (ER). All subunits are required for a maximal enzyme activity. The protein is Oligosaccharyltransferase complex subunit ostc-B of Xenopus laevis (African clawed frog).